Consider the following 272-residue polypeptide: Ribonuclease 3 (272 aa).

Polar residues predominate over residues 1-20 (MTDDVTNVEQPSTASEQQPQ). The interval 1–38 (MTDDVTNVEQPSTASEQQPQDVPAAEPSAAKKRRANKA) is disordered. The 128-residue stretch at 44–171 (AAAIEQRLGH…VIGAIYLDGG (128 aa)) folds into the RNase III domain. Mg(2+) is bound at residue Glu84. Residue Asp88 is part of the active site. Residues Asp157 and Glu160 each coordinate Mg(2+). Glu160 is a catalytic residue. A DRBM domain is found at 196–265 (DPKTVLQEWA…ASAMLAREGV (70 aa)).

Belongs to the ribonuclease III family. Homodimer. Requires Mg(2+) as cofactor.

It is found in the cytoplasm. It catalyses the reaction Endonucleolytic cleavage to 5'-phosphomonoester.. Its function is as follows. Digests double-stranded RNA. Involved in the processing of primary rRNA transcript to yield the immediate precursors to the large and small rRNAs (23S and 16S). Processes some mRNAs, and tRNAs when they are encoded in the rRNA operon. Processes pre-crRNA and tracrRNA of type II CRISPR loci if present in the organism. This chain is Ribonuclease 3, found in Rhodopseudomonas palustris (strain ATCC BAA-98 / CGA009).